Here is a 766-residue protein sequence, read N- to C-terminus: Single-minded homolog 1 (766 aa).

Residues 1-53 form the bHLH domain; it reads MKEKSKNAARTRREKENSEFYELAKLLPLPSAITSQLDKASIIRLTTSYLKMR. PAS domains lie at 77-147 and 218-288; these read GREL…QPYH and PPSA…LVKG. One can recognise a PAC domain in the interval 292-335; sequence TKYYRFLAKHGGWVWVQSYATIVHNSRSSRPHCIVSVNYVLTDT. In terms of domain architecture, Single-minded C-terminal spans 336–766; that stretch reads EYKGLQLSLD…GTSVIITNGS (431 aa). The span at 353 to 365 shows a compositional bias: polar residues; that stretch reads AFSYTSSSTPTMT. Disordered stretches follow at residues 353-431, 528-563, and 642-662; these read AFSY…SQHD, WDEDSVVSSPDPGSASESGDRYRTEQYQSSPHEPSK, and SPRENDYDNSPTALSRISSPN. A Nuclear localization signal motif is present at residues 368–387; sequence RKGAKSRLSSSKSKSRTSPY. A compositionally biased stretch (low complexity) spans 373–385; that stretch reads SRLSSSKSKSRTS. Basic and acidic residues predominate over residues 394-404; that stretch reads HTERSESDHDS. The span at 649-662 shows a compositional bias: polar residues; that stretch reads DNSPTALSRISSPN.

Efficient DNA binding requires dimerization with another bHLH protein. Heterodimer; forms a heterodimer with ARNT, ARNT2.

The protein resides in the nucleus. Its function is as follows. Transcriptional factor that may have pleiotropic effects during embryogenesis and in the adult. In Pan troglodytes (Chimpanzee), this protein is Single-minded homolog 1 (SIM1).